The following is a 289-amino-acid chain: Heme oxygenase 1, chloroplastic (289 aa).

The N-terminal 64 residues, M1 to V64, are a transit peptide targeting the chloroplast. Heme b is bound at residue H96.

The protein belongs to the heme oxygenase family.

The protein localises to the plastid. It localises to the chloroplast. It carries out the reaction heme b + 3 reduced [NADPH--hemoprotein reductase] + 3 O2 = biliverdin IXalpha + CO + Fe(2+) + 3 oxidized [NADPH--hemoprotein reductase] + 3 H2O + H(+). In terms of biological role, catalyzes the opening of the heme ring to form the open-chain tetrapyrrole biliverdin IX with the release of iron and carbon monoxide (CO). Is a key enzyme in the synthesis of the chromophore of the phytochrome family of plant photoreceptors. Essential for photoperiod response and repression of flowering through cytochromes that inhibit flowering by affecting both HD1 and EHD1 flowering pathways. The polypeptide is Heme oxygenase 1, chloroplastic (HO1) (Oryza sativa subsp. japonica (Rice)).